Here is a 360-residue protein sequence, read N- to C-terminus: DNA replication and repair protein RecF (360 aa).

30-37 (GHNGSGKT) contacts ATP.

The protein belongs to the RecF family.

The protein resides in the cytoplasm. Functionally, the RecF protein is involved in DNA metabolism; it is required for DNA replication and normal SOS inducibility. RecF binds preferentially to single-stranded, linear DNA. It also seems to bind ATP. The chain is DNA replication and repair protein RecF from Shewanella sediminis (strain HAW-EB3).